A 175-amino-acid polypeptide reads, in one-letter code: Ribulose bisphosphate carboxylase small subunit, chloroplastic (175 aa).

A chloroplast-targeting transit peptide spans 1–46 (MAPSVMASSATTVAPFQGLKSTAGMPVARRSGNSSFGNVSNGGRIR). The interaction with large subunit stretch occupies residues 60–64 (ETLSY).

This sequence belongs to the RuBisCO small chain family. In terms of assembly, heterohexadecamer of 8 large and 8 small subunits.

Its subcellular location is the plastid. It localises to the chloroplast. RuBisCO catalyzes two reactions: the carboxylation of D-ribulose 1,5-bisphosphate, the primary event in carbon dioxide fixation, as well as the oxidative fragmentation of the pentose substrate. Both reactions occur simultaneously and in competition at the same active site. Although the small subunit is not catalytic it is essential for maximal activity. The chain is Ribulose bisphosphate carboxylase small subunit, chloroplastic from Oryza sativa subsp. indica (Rice).